Reading from the N-terminus, the 317-residue chain is Apolipoprotein E (317 aa).

The signal sequence occupies residues 1–18; it reads MKVLWAALLVTFLAGCQA. 8 tandem repeats follow at residues 80 to 101, 102 to 123, 124 to 145, 146 to 167, 168 to 189, 190 to 211, 212 to 233, and 234 to 255. The 8 X 22 AA approximate tandem repeats stretch occupies residues 80–255; the sequence is ALMDETMKEL…RLDEVKEQVA (176 aa). The residue at position 143 (M143) is a Methionine sulfoxide. At S147 the chain carries Phosphoserine. Residues 158 to 168 form an LDL and other lipoprotein receptors binding region; that stretch reads HLRKLRKRLLR. 162-165 is a binding site for heparin; that stretch reads LRKR. The segment at 210–290 is lipid-binding and lipoprotein association; the sequence is AATVGSLAGQ…SWFEPLVEDM (81 aa). 229 to 236 is a binding site for heparin; it reads GERLRARM. Positions 266–317 are homooligomerization; that stretch reads QQIRLQAEAFQARLKSWFEPLVEDMQRQWAGLVEKVQAAMGTSAAPVPSDNH. Residues 278-290 form a specificity for association with VLDL region; sequence RLKSWFEPLVEDM.

It belongs to the apolipoprotein A1/A4/E family. Homotetramer. May interact with ABCA1; functionally associated with ABCA1 in the biogenesis of HDLs. May interact with APP/A4 amyloid-beta peptide; the interaction is extremely stable in vitro but its physiological significance is unclear. May interact with MAPT. May interact with MAP2. In the cerebrospinal fluid, interacts with secreted SORL1. Interacts with PMEL; this allows the loading of PMEL luminal fragment on ILVs to induce fibril nucleation. Post-translationally, APOE exists as multiple glycosylated and sialylated glycoforms within cells and in plasma. The extent of glycosylation and sialylation are tissue and context specific. In terms of processing, glycated in plasma VLDL. Phosphorylated by FAM20C in the extracellular medium.

The protein localises to the secreted. It localises to the extracellular space. Its subcellular location is the extracellular matrix. The protein resides in the extracellular vesicle. It is found in the endosome. The protein localises to the multivesicular body. Functionally, APOE is an apolipoprotein, a protein associating with lipid particles, that mainly functions in lipoprotein-mediated lipid transport between organs via the plasma and interstitial fluids. APOE is a core component of plasma lipoproteins and is involved in their production, conversion and clearance. Apolipoproteins are amphipathic molecules that interact both with lipids of the lipoprotein particle core and the aqueous environment of the plasma. As such, APOE associates with chylomicrons, chylomicron remnants, very low density lipoproteins (VLDL) and intermediate density lipoproteins (IDL) but shows a preferential binding to high-density lipoproteins (HDL). It also binds a wide range of cellular receptors including the LDL receptor/LDLR, the LDL receptor-related proteins LRP1, LRP2 and LRP8 and the very low-density lipoprotein receptor/VLDLR that mediate the cellular uptake of the APOE-containing lipoprotein particles. Finally, APOE also has a heparin-binding activity and binds heparan-sulfate proteoglycans on the surface of cells, a property that supports the capture and the receptor-mediated uptake of APOE-containing lipoproteins by cells. A main function of APOE is to mediate lipoprotein clearance through the uptake of chylomicrons, VLDLs, and HDLs by hepatocytes. APOE is also involved in the biosynthesis by the liver of VLDLs as well as their uptake by peripheral tissues ensuring the delivery of triglycerides and energy storage in muscle, heart and adipose tissues. By participating in the lipoprotein-mediated distribution of lipids among tissues, APOE plays a critical role in plasma and tissues lipid homeostasis. APOE is also involved in two steps of reverse cholesterol transport, the HDLs-mediated transport of cholesterol from peripheral tissues to the liver, and thereby plays an important role in cholesterol homeostasis. First, it is functionally associated with ABCA1 in the biogenesis of HDLs in tissues. Second, it is enriched in circulating HDLs and mediates their uptake by hepatocytes. APOE also plays an important role in lipid transport in the central nervous system, regulating neuron survival and sprouting. The polypeptide is Apolipoprotein E (APOE) (Gorilla gorilla gorilla (Western lowland gorilla)).